We begin with the raw amino-acid sequence, 495 residues long: Glycerol kinase (495 aa).

Thr11 provides a ligand contact to ADP. Residues Thr11, Thr12, and Ser13 each coordinate ATP. Thr11 is a sn-glycerol 3-phosphate binding site. Arg15 serves as a coordination point for ADP. Positions 81, 82, 133, and 242 each coordinate sn-glycerol 3-phosphate. Glycerol-binding residues include Arg81, Glu82, Tyr133, Asp242, and Gln243. ADP-binding residues include Thr264 and Gly307. ATP-binding residues include Thr264, Gly307, Gln311, and Gly408. Gly408 is a binding site for ADP.

The protein belongs to the FGGY kinase family.

The catalysed reaction is glycerol + ATP = sn-glycerol 3-phosphate + ADP + H(+). It participates in polyol metabolism; glycerol degradation via glycerol kinase pathway; sn-glycerol 3-phosphate from glycerol: step 1/1. Its activity is regulated as follows. Inhibited by fructose 1,6-bisphosphate (FBP). Key enzyme in the regulation of glycerol uptake and metabolism. Catalyzes the phosphorylation of glycerol to yield sn-glycerol 3-phosphate. This chain is Glycerol kinase, found in Geobacter sp. (strain M21).